The sequence spans 319 residues: tRNA uridine(34) hydroxylase (319 aa).

The Rhodanese domain maps to 124-218; it reads LDEDTVILDA…YGKNEETKGE (95 aa). Catalysis depends on cysteine 178, which acts as the Cysteine persulfide intermediate.

This sequence belongs to the TrhO family.

It catalyses the reaction uridine(34) in tRNA + AH2 + O2 = 5-hydroxyuridine(34) in tRNA + A + H2O. In terms of biological role, catalyzes oxygen-dependent 5-hydroxyuridine (ho5U) modification at position 34 in tRNAs. In Listeria welshimeri serovar 6b (strain ATCC 35897 / DSM 20650 / CCUG 15529 / CIP 8149 / NCTC 11857 / SLCC 5334 / V8), this protein is tRNA uridine(34) hydroxylase.